We begin with the raw amino-acid sequence, 305 residues long: Chromatin modification-related protein EAF3 (305 aa).

The Tudor-knot domain maps to 14–67 (VLAYHGPLLYEARVILAEVWDESNTLLGTVGPHYFIHYKGWKQTWDEWVPESRL). Positions 86 to 127 (AKKGRSTGGSGGTGSPGAGKGGLKDKKKDTKKRGRDAMESES) are disordered. A compositionally biased stretch (gly residues) spans 91 to 106 (STGGSGGTGSPGAGKG). An MRG domain is found at 131–304 (KRPEVKIVIP…TTTHYQNLSR (174 aa)).

This sequence belongs to the MRG family. In terms of assembly, component of the NuA4 histone acetyltransferase complex.

Its subcellular location is the nucleus. Involved in deacetylation of histones, chromatin assembly and chromosome segregation. May act as a transcriptional oscillator, directing histone deacetylases to specific chromosomal domains. Component of the NuA4 histone acetyltransferase complex which is involved in transcriptional activation of selected genes principally by acetylation of nucleosomal histone H4 and H2A. The NuA4 complex is also involved in DNA repair. The chain is Chromatin modification-related protein EAF3 (EAF3) from Cryptococcus neoformans var. neoformans serotype D (strain B-3501A) (Filobasidiella neoformans).